The chain runs to 134 residues: MRSREVSLVLLALVLCPAPRGSAAPVTAGRAGALAKMYTRGNHWAVGHLMGKKSVAESPQLREEESLKEQLREYAQWEEATRNLLSLLQAKVAQGHQPPRWEPLSIHQPAWDSKDVSNFKDSGSQREGGNPQLY.

The first 23 residues, 1-23 (MRSREVSLVLLALVLCPAPRGSA), serve as a signal peptide directing secretion. Met50 is modified (methionine amide). The propeptide occupies 54–134 (SVAESPQLRE…QREGGNPQLY (81 aa)). The tract at residues 98-134 (PPRWEPLSIHQPAWDSKDVSNFKDSGSQREGGNPQLY) is disordered. Residues 119 to 134 (FKDSGSQREGGNPQLY) show a composition bias toward polar residues.

Belongs to the bombesin/neuromedin-B/ranatensin family.

The protein localises to the secreted. It is found in the cytoplasmic vesicle. It localises to the secretory vesicle lumen. The protein resides in the cell projection. Its subcellular location is the neuron projection. Stimulates the release of gastrin and other gastrointestinal hormones. Contributes to the perception of prurient stimuli and to the transmission of itch signals in the spinal cord that promote scratching behavior. Contributes primarily to nonhistaminergic itch sensation. In one study, shown to act in the amygdala as part of an inhibitory network which inhibits memory specifically related to learned fear. In another study, shown to act on vasoactive intestinal peptide (VIP)-expressing cells in the auditory cortex, most likely via extrasynaptic diffusion from local and long-range sources, to mediate disinhibition of glutamatergic cells via VIP cell-specific GRPR signaling which leads to enhanced auditory fear memories. Contributes to the regulation of food intake. Inhibits voltage-gated sodium channels but enhances voltage-gated potassium channels in hippocampal neurons. Induces sighing by acting directly on the pre-Botzinger complex, a cluster of several thousand neurons in the ventrolateral medulla responsible for inspiration during respiratory activity. In terms of biological role, induces an itch response through activation of receptors present on mast cells, triggering mast cell degranulation. This is Gastrin-releasing peptide (GRP) from Ovis aries (Sheep).